A 325-amino-acid polypeptide reads, in one-letter code: Putative ankyrin repeat protein RF_0011 (325 aa).

ANK repeat units lie at residues 63 to 94 (NGNT…AINM), 99 to 130 (RGQP…NINA), and 134 to 164 (CGRT…EMII).

The chain is Putative ankyrin repeat protein RF_0011 from Rickettsia felis (strain ATCC VR-1525 / URRWXCal2) (Rickettsia azadi).